Consider the following 270-residue polypeptide: Mediator of RNA polymerase II transcription subunit 4 (270 aa).

Positions 1-22 are disordered; it reads MAASSSGEKEKERMGGVSGMTG. An N-acetylalanine modification is found at Ala2. The stretch at 26-131 forms a coiled coil; it reads TRERLLSALE…ATAVYQAKEK (106 aa). Ser32 carries the post-translational modification Phosphoserine. The segment at 227 to 270 is disordered; sequence MSVNMLPPNHSTDFLLEPPGHNKENEDDVEVMSTDSSSSSSDSD. Over residues 259–270 the composition is skewed to low complexity; sequence STDSSSSSSDSD.

The protein belongs to the Mediator complex subunit 4 family. Component of the Mediator complex, which is composed of MED1, MED4, MED6, MED7, MED8, MED9, MED10, MED11, MED12, MED13, MED13L, MED14, MED15, MED16, MED17, MED18, MED19, MED20, MED21, MED22, MED23, MED24, MED25, MED26, MED27, MED29, MED30, MED31, CCNC, CDK8 and CDC2L6/CDK11. The MED12, MED13, CCNC and CDK8 subunits form a distinct module termed the CDK8 module. Mediator containing the CDK8 module is less active than Mediator lacking this module in supporting transcriptional activation. Individual preparations of the Mediator complex lacking one or more distinct subunits have been variously termed ARC, CRSP, DRIP, PC2, SMCC and TRAP.

Its subcellular location is the nucleus. Component of the Mediator complex, a coactivator involved in the regulated transcription of nearly all RNA polymerase II-dependent genes. Mediator functions as a bridge to convey information from gene-specific regulatory proteins to the basal RNA polymerase II transcription machinery. Mediator is recruited to promoters by direct interactions with regulatory proteins and serves as a scaffold for the assembly of a functional preinitiation complex with RNA polymerase II and the general transcription factors. The sequence is that of Mediator of RNA polymerase II transcription subunit 4 (Med4) from Rattus norvegicus (Rat).